A 215-amino-acid polypeptide reads, in one-letter code: Pyrrolidone-carboxylate peptidase (215 aa).

Active-site residues include E80, C143, and H167.

Belongs to the peptidase C15 family. In terms of assembly, homotetramer.

The protein localises to the cytoplasm. It catalyses the reaction Release of an N-terminal pyroglutamyl group from a polypeptide, the second amino acid generally not being Pro.. Removes 5-oxoproline from various penultimate amino acid residues except L-proline. In Bacillus cereus (strain ZK / E33L), this protein is Pyrrolidone-carboxylate peptidase.